Here is a 357-residue protein sequence, read N- to C-terminus: Peptide chain release factor 1 (357 aa).

Q236 carries the N5-methylglutamine modification.

It belongs to the prokaryotic/mitochondrial release factor family. Methylated by PrmC. Methylation increases the termination efficiency of RF1.

It localises to the cytoplasm. In terms of biological role, peptide chain release factor 1 directs the termination of translation in response to the peptide chain termination codons UAG and UAA. The polypeptide is Peptide chain release factor 1 (prfA) (Mycobacterium bovis (strain ATCC BAA-935 / AF2122/97)).